A 654-amino-acid polypeptide reads, in one-letter code: MNDSEALQAATVRIRNIGGIDERRVRLDPGVTVLTGRNATNRTSFLRALMGACGSDAISLKGDADEGSVELELDGRTYTRLLSRENGTVSTDGTPYLRDAATADRFAFLLGSNEARRAVVAERDLYDVIMSLVDTDAIEAEIERLQSRRTQVERRLDSLDSLDADRRSLESKRDDLEAEIEALEAERDDIEAEIEAEDRTVETQREHQAELDEVLSELQSARSDLESVRFRLQSERESVESLREERSELQSELDSFDAEAVDRGEASDRIESVRSRIESLNSTISELQTVVQYTEDVLDGKAGLVEDSLGADGDGSVTDQLVSSETTTCWTCGTEVDRDQIRGTTDRLREVRDEKREERAELRRELDELERSMRAAEQAERDRRKLRDKLRRLEDELDRRTGQIESLTDRREELAEQVDALEADASELRGQSGGEGDLIELHRELNEVEFALDRTRDDLASVHDELDELDDRFDEREELEREREQVNEELEAARTRIRSLTAAAVESFNEEMETVLDLLGYDNIERVWLERVERRVREGRRKVEKAQFELHIVRASDSGAVYEDSIDHLSESEREVVGLVFALAGYLVHEVYEEVPFMLLDSVEAIDAGRIAALVDHFEQYPTFLVAALLPEDAQALDASYRRVTWGTDVTPAA.

2 coiled-coil regions span residues 135 to 290 (TDAI…LQTV) and 341 to 503 (IRGT…LTAA).

It belongs to the Sph1/Sph2 family.

Functionally, involved in cell-shape determination. Required for the formation of rods and wild-type-like motility. The protein is Smc-like protein Sph3 of Haloferax volcanii (strain ATCC 29605 / DSM 3757 / JCM 8879 / NBRC 14742 / NCIMB 2012 / VKM B-1768 / DS2) (Halobacterium volcanii).